The primary structure comprises 611 residues: mRNA export factor GLE1 (611 aa).

2 disordered regions span residues 69–94 and 220–243; these read SEDE…SQIC and KIRS…EKIR. Residues 71–89 show a composition bias toward acidic residues; the sequence is DEMESDEGEESDDEEEEED.

It belongs to the GLE1 family. In terms of assembly, part of the nuclear pore complex (NPC). The NPC has an eight-fold symmetrical structure comprising a central transport channel and two rings, the cytoplasmic and nuclear rings, to which eight filaments are attached. The cytoplasmic filaments have loose ends, while the nuclear filaments are joined in a distal ring, forming a nuclear basket. NPCs are highly dynamic in configuration and composition, and can be devided in 3 subcomplexes, the NUP62 subcomplex, the NUP107-160 subcomplex and the NUP93 subcomplex, containing approximately 30 different nucleoporin proteins.

It localises to the nucleus envelope. The protein resides in the nucleus. Its subcellular location is the nuclear pore complex. Required for seed viability. The sequence is that of mRNA export factor GLE1 from Arabidopsis thaliana (Mouse-ear cress).